The following is a 162-amino-acid chain: Interleukin-15 (162 aa).

A signal peptide spans 1 to 29 (MRILKPYLRSTSIQCYLCLLLNSHFLTEA). The propeptide occupies 30 to 48 (GIHVFILGCISAGLPKTEA). Cystine bridges form between Cys83/Cys133 and Cys90/Cys136. Residues Asn113, Asn121, and Asn127 are each glycosylated (N-linked (GlcNAc...) asparagine).

The protein belongs to the IL-15/IL-21 family.

It localises to the secreted. Its function is as follows. Cytokine that plays a major role in the development of inflammatory and protective immune responses to microbial invaders and parasites by modulating immune cells of both the innate and adaptive immune systems. Stimulates the proliferation of natural killer cells, T-cells and B-cells and promotes the secretion of several cytokines. In monocytes, induces the production of IL8 and monocyte chemotactic protein 1/CCL2, two chemokines that attract neutrophils and monocytes respectively to sites of infection. Unlike most cytokines, which are secreted in soluble form, IL15 is expressed in association with its high affinity IL15RA on the surface of IL15-producing cells and delivers signals to target cells that express IL2RB and IL2RG receptor subunits. Binding to its receptor triggers the phosphorylation of JAK1 and JAK3 and the recruitment and subsequent phosphorylation of signal transducer and activator of transcription-3/STAT3 and STAT5. In mast cells, induces the rapid tyrosine phosphorylation of STAT6 and thereby controls mast cell survival and release of cytokines such as IL4. This chain is Interleukin-15 (IL15), found in Bubalus bubalis (Domestic water buffalo).